Consider the following 348-residue polypeptide: Putative serine/threonine-protein phosphatase C26H8.05c (348 aa).

Mn(2+) contacts are provided by aspartate 53, histidine 55, aspartate 81, and asparagine 113. Histidine 114 serves as the catalytic Proton donor. Positions 163 and 237 each coordinate Mn(2+). The disordered stretch occupies residues threonine 259–aspartate 282. Positions aspartate 269–proline 280 are enriched in low complexity. Serine 272 carries the post-translational modification Phosphoserine. A Leucine methyl ester modification is found at leucine 348.

The protein belongs to the PPP phosphatase family. PP-1 subfamily. Requires Mn(2+) as cofactor.

It localises to the cytoplasm. The protein resides in the nucleus. It carries out the reaction O-phospho-L-seryl-[protein] + H2O = L-seryl-[protein] + phosphate. It catalyses the reaction O-phospho-L-threonyl-[protein] + H2O = L-threonyl-[protein] + phosphate. This is Putative serine/threonine-protein phosphatase C26H8.05c from Schizosaccharomyces pombe (strain 972 / ATCC 24843) (Fission yeast).